The primary structure comprises 1196 residues: Contactin rig-6 (1196 aa).

Positions methionine 1–alanine 19 are cleaved as a signal peptide. 2 N-linked (GlcNAc...) asparagine glycosylation sites follow: asparagine 100 and asparagine 195. Ig-like C2-type domains follow at residues proline 144 to serine 225 and proline 232 to serine 319. 2 cysteine pairs are disulfide-bonded: cysteine 169-cysteine 220 and cysteine 263-cysteine 316. Asparagine 343 carries an N-linked (GlcNAc...) asparagine glycan. Ig-like C2-type domains are found at residues proline 355 to arginine 438, proline 441 to threonine 533, proline 539 to isoleucine 626, and proline 631 to threonine 730. A disulfide bridge connects residues cysteine 372 and cysteine 420. Residue asparagine 457 is glycosylated (N-linked (GlcNAc...) asparagine). Intrachain disulfides connect cysteine 462–cysteine 517 and cysteine 562–cysteine 610. N-linked (GlcNAc...) asparagine glycosylation occurs at asparagine 644. Residues cysteine 653 and cysteine 718 are joined by a disulfide bond. Fibronectin type-III domains lie at serine 736–glycine 844, threonine 849–glutamate 961, lysine 963–histidine 1057, and leucine 1064–proline 1168. N-linked (GlcNAc...) asparagine glycosylation is found at asparagine 895, asparagine 925, asparagine 945, asparagine 974, asparagine 979, asparagine 986, asparagine 1002, and asparagine 1092. The helical transmembrane segment at threonine 1174–tryptophan 1194 threads the bilayer. Serine 1177 carries GPI-anchor amidated serine lipidation. Residues serine 1178–leucine 1196 constitute a propeptide, removed in mature form.

It belongs to the immunoglobulin superfamily. Contactin family. Interacts with sax-7; the interaction establishes synaptic connections between neurons. Expressed in neurons including the I1 and I3 pharyngeal interneurons, NSM and VNC motor neurons, HSN and CAN neurons, the ALM and PLM touch receptor neurons and other unidentified head neurons. Expressed in AVG interneurons. Also expressed in somatic muscles, the excretory canal, the excretory cell and the hypodermis.

It is found in the cell membrane. The protein resides in the perikaryon. The protein localises to the cell projection. It localises to the axon. Its subcellular location is the synapse. It is found in the cytoplasm. Probable cell adhesion protein involved in patterning of the nervous system, playing a role in ALM and PLM touch receptor axon growth and VNC axon navigation. By associating with the transmembrane protein sax-7, mediates axonal interactions to establish synaptic connections between the AVG interneuron and the two PHC sensory neurons. Also required for non-neuronal cell migration in the excretory canal, regulating excretory canal elongation and excretory cell morphogenesis. Plays a role in regulating male mating behavior. This is Contactin rig-6 from Caenorhabditis elegans.